Here is a 478-residue protein sequence, read N- to C-terminus: Cytochrome c-552 (478 aa).

Residues 1-26 (MARKTLRARRFFSLIFPFFFITSVYA) form the signal peptide. Histidine 94 serves as a coordination point for heme c. Heme contacts are provided by cysteine 122, cysteine 125, and lysine 126. 6 residues coordinate heme c: cysteine 160, cysteine 163, histidine 164, cysteine 209, cysteine 212, and histidine 213. Ca(2+) contacts are provided by glutamate 215, tyrosine 216, lysine 261, and glutamine 263. Tyrosine 216 is a binding site for substrate. Substrate is bound at residue histidine 264. Residues histidine 275, cysteine 282, cysteine 285, histidine 286, histidine 301, cysteine 314, cysteine 317, histidine 318, and histidine 393 each contribute to the heme c site.

It belongs to the cytochrome c-552 family. It depends on Ca(2+) as a cofactor. Heme c serves as cofactor.

The protein resides in the periplasm. It catalyses the reaction 6 Fe(III)-[cytochrome c] + NH4(+) + 2 H2O = 6 Fe(II)-[cytochrome c] + nitrite + 8 H(+). It functions in the pathway nitrogen metabolism; nitrate reduction (assimilation). Its function is as follows. Catalyzes the reduction of nitrite to ammonia, consuming six electrons in the process. The sequence is that of Cytochrome c-552 from Salmonella gallinarum (strain 287/91 / NCTC 13346).